Consider the following 1116-residue polypeptide: Protein translocase subunit SecA (1116 aa).

ATP-binding positions include Gln176, 194-198 (GEGKT), and Asp693.

Belongs to the SecA family. In terms of assembly, monomer and homodimer. Part of the essential Sec protein translocation apparatus which comprises SecA, SecYEG and auxiliary proteins SecDF. Other proteins may also be involved.

The protein localises to the cell inner membrane. It localises to the cytoplasm. It catalyses the reaction ATP + H2O + cellular proteinSide 1 = ADP + phosphate + cellular proteinSide 2.. Its function is as follows. Part of the Sec protein translocase complex. Interacts with the SecYEG preprotein conducting channel. Has a central role in coupling the hydrolysis of ATP to the transfer of proteins into and across the cell membrane, serving as an ATP-driven molecular motor driving the stepwise translocation of polypeptide chains across the membrane. The sequence is that of Protein translocase subunit SecA from Amoebophilus asiaticus (strain 5a2).